The primary structure comprises 158 residues: Transcription elongation factor GreA (158 aa).

This sequence belongs to the GreA/GreB family.

In terms of biological role, necessary for efficient RNA polymerase transcription elongation past template-encoded arresting sites. The arresting sites in DNA have the property of trapping a certain fraction of elongating RNA polymerases that pass through, resulting in locked ternary complexes. Cleavage of the nascent transcript by cleavage factors such as GreA or GreB allows the resumption of elongation from the new 3'terminus. GreA releases sequences of 2 to 3 nucleotides. In Sinorhizobium medicae (strain WSM419) (Ensifer medicae), this protein is Transcription elongation factor GreA.